Reading from the N-terminus, the 339-residue chain is uncharacterized protein (339 aa).

One can recognise an ABC transporter domain in the interval Leu13 to Ile243. Gly45–Ser52 serves as a coordination point for ATP.

This sequence belongs to the ABC transporter superfamily.

It is found in the cell inner membrane. Functionally, probably part of a binding-protein-dependent transport system y4fNOP. Probably responsible for energy coupling to the transport system. This is an uncharacterized protein from Sinorhizobium fredii (strain NBRC 101917 / NGR234).